Here is a 288-residue protein sequence, read N- to C-terminus: Mortality factor 4-like protein 2 (288 aa).

Residues M1–S15 show a composition bias toward polar residues. The interval M1–E113 is disordered. Position 71 is a phosphoserine (S71). The region spanning N117–L288 is the MRG domain.

As to quaternary structure, component of the NuA4 histone acetyltransferase complex which contains the catalytic subunit KAT5/TIP60 and the subunits EP400, TRRAP/PAF400, BRD8/SMAP, EPC1, DMAP1/DNMAP1, RUVBL1/TIP49, RUVBL2, ING3, actin, ACTL6A/BAF53A, MORF4L1/MRG15, MORF4L2/MRGX, MRGBP, YEATS4/GAS41 and VPS72/YL1. The NuA4 complex interacts with MYC and the adenovirus E1A protein. MORF4L1 may also participate in the formation of NuA4 related complexes which lack the KAT5/TIP60 catalytic subunit, but which include the SWI/SNF related protein SRCAP. Component of the MSIN3A histone deacetylase complex, which includes SIN3A, HDAC2, ARID4B, MORF4L1, RBBP4/RbAp48, and RBBP7/RbAp46. Interacts with MRFAP1 and RB1. May also interact with one or more as yet undefined members of the TLE (transducin-like enhancer of split) family of transcriptional repressors.

It localises to the nucleus. Functionally, component of the NuA4 histone acetyltransferase complex which is involved in transcriptional activation of select genes principally by acetylation of nucleosomal histone H4 and H2A. This modification may both alter nucleosome - DNA interactions and promote interaction of the modified histones with other proteins which positively regulate transcription. This complex may be required for the activation of transcriptional programs associated with oncogene and proto-oncogene mediated growth induction, tumor suppressor mediated growth arrest and replicative senescence, apoptosis, and DNA repair. The NuA4 complex ATPase and helicase activities seem to be, at least in part, contributed by the association of RUVBL1 and RUVBL2 with EP400. NuA4 may also play a direct role in DNA repair when directly recruited to sites of DNA damage. Also a component of the MSIN3A complex which acts to repress transcription by deacetylation of nucleosomal histones. The sequence is that of Mortality factor 4-like protein 2 (MORF4L2) from Homo sapiens (Human).